Reading from the N-terminus, the 181-residue chain is Adenylyl-sulfate kinase (181 aa).

12–19 contributes to the ATP binding site; the sequence is GLSGAGKT. The active-site Phosphoserine intermediate is S86.

This sequence belongs to the APS kinase family.

The enzyme catalyses adenosine 5'-phosphosulfate + ATP = 3'-phosphoadenylyl sulfate + ADP + H(+). Its pathway is sulfur metabolism; hydrogen sulfide biosynthesis; sulfite from sulfate: step 2/3. In terms of biological role, catalyzes the synthesis of activated sulfate. The chain is Adenylyl-sulfate kinase from Rippkaea orientalis (strain PCC 8801 / RF-1) (Cyanothece sp. (strain PCC 8801)).